The primary structure comprises 408 residues: Ribonuclease T2-like (408 aa).

The signal sequence occupies residues 1–25; it reads MLQSIPGPQHILKALTGSLGLSTIF. 4 disulfide bridges follow: cysteine 38/cysteine 56, cysteine 45/cysteine 92, cysteine 55/cysteine 158, and cysteine 100/cysteine 150. Residue histidine 85 is part of the active site. The N-linked (GlcNAc...) asparagine glycan is linked to asparagine 108. Residues glutamate 143 and histidine 147 contribute to the active site. A glycan (N-linked (GlcNAc...) asparagine) is linked at asparagine 173. Cysteine 222 and cysteine 257 are disulfide-bonded. Positions 268-292 are disordered; sequence KHREPSRTTDTPSQPTTTGTPFKGR. The span at 275–288 shows a compositional bias: low complexity; that stretch reads TTDTPSQPTTTGTP. A glycan (N-linked (GlcNAc...) asparagine) is linked at asparagine 372.

Belongs to the RNase T2 family.

It localises to the vacuole lumen. It is found in the cytoplasm. The enzyme catalyses a ribonucleotidyl-ribonucleotide-RNA + H2O = a 3'-end 3'-phospho-ribonucleotide-RNA + a 5'-end dephospho-ribonucleoside-RNA + H(+). In terms of biological role, rnase which modulates cell survival under stress conditions. Released from the vacuole to the cytoplasm during stress to promote tRNA and rRNA cleavage and to activate separately a downstream pathway that promotes cell death. Involved in cell size, vacuolar morphology and growth at high temperatures and high salt concentration. The protein is Ribonuclease T2-like (rny1) of Aspergillus fumigatus (strain ATCC MYA-4609 / CBS 101355 / FGSC A1100 / Af293) (Neosartorya fumigata).